The primary structure comprises 115 residues: Aspartate 1-decarboxylase (115 aa).

Ser-25 serves as the catalytic Schiff-base intermediate with substrate; via pyruvic acid. A Pyruvic acid (Ser) modification is found at Ser-25. A substrate-binding site is contributed by Thr-57. The active-site Proton donor is Tyr-58. 72-74 is a binding site for substrate; sequence GAA.

It belongs to the PanD family. As to quaternary structure, heterooctamer of four alpha and four beta subunits. The cofactor is pyruvate. Post-translationally, is synthesized initially as an inactive proenzyme, which is activated by self-cleavage at a specific serine bond to produce a beta-subunit with a hydroxyl group at its C-terminus and an alpha-subunit with a pyruvoyl group at its N-terminus.

It localises to the cytoplasm. It carries out the reaction L-aspartate + H(+) = beta-alanine + CO2. It participates in cofactor biosynthesis; (R)-pantothenate biosynthesis; beta-alanine from L-aspartate: step 1/1. Functionally, catalyzes the pyruvoyl-dependent decarboxylation of aspartate to produce beta-alanine. The chain is Aspartate 1-decarboxylase from Campylobacter fetus subsp. fetus (strain 82-40).